The primary structure comprises 81 residues: Elicitor peptide 4 (81 aa).

Positions 1-54 (MERGVSYYLWIPFKFIHQTFGSLLLKLLGLRSPSDHSFPEDGEEEVKVVEVSSR) are excised as a propeptide. The disordered stretch occupies residues 57–81 (PGKKNVLKKSRESSGKPGGTNKKPF).

The protein belongs to the brassicaceae elicitor peptide family.

Its function is as follows. Elicitor of plant defense. The polypeptide is Elicitor peptide 4 (PEP4) (Arabidopsis thaliana (Mouse-ear cress)).